Reading from the N-terminus, the 366-residue chain is Putative [LysW]-aminoadipate semialdehyde/glutamate semialdehyde transaminase (366 aa).

Pyridoxal 5'-phosphate contacts are provided by residues 90 to 91 (GT) and phenylalanine 117. Arginine 120 lines the substrate pocket. Position 202–205 (202–205 (DEVQ)) interacts with pyridoxal 5'-phosphate. Lysine 230 is subject to N6-(pyridoxal phosphate)lysine. Residue serine 254 participates in substrate binding. Threonine 255 is a pyridoxal 5'-phosphate binding site.

This sequence belongs to the class-III pyridoxal-phosphate-dependent aminotransferase family. LysJ subfamily. In terms of assembly, homodimer. Pyridoxal 5'-phosphate is required as a cofactor.

The protein localises to the cytoplasm. The catalysed reaction is [amino-group carrier protein]-C-terminal-gamma-(L-lysyl)-L-glutamate + 2-oxoglutarate = [amino-group carrier protein]-C-terminal-N-(1-carboxy-5-oxopentan-1-yl)-L-glutamine + L-glutamate. It carries out the reaction [amino-group carrier protein]-C-terminal-gamma-(L-ornithyl)-L-glutamate + 2-oxoglutarate = [amino-group carrier protein]-C-terminal-gamma-(L-glutamyl-5-semialdehyde)-L-glutamate + L-glutamate. Its pathway is amino-acid biosynthesis; L-lysine biosynthesis via AAA pathway; L-lysine from L-alpha-aminoadipate (Thermus route): step 4/5. It functions in the pathway amino-acid biosynthesis; L-arginine biosynthesis. In terms of biological role, involved in both the arginine and lysine biosynthetic pathways. This chain is Putative [LysW]-aminoadipate semialdehyde/glutamate semialdehyde transaminase, found in Pyrococcus horikoshii (strain ATCC 700860 / DSM 12428 / JCM 9974 / NBRC 100139 / OT-3).